We begin with the raw amino-acid sequence, 47 residues long: MKKWLLIIAGALIISACANKDVYFNGAEGSHSGVKFDKDSRQWGLNQ.

The signal sequence occupies residues 1 to 18; that stretch reads MKKWLLIIAGALIISACA. Residues 28 to 47 are disordered; the sequence is EGSHSGVKFDKDSRQWGLNQ.

This is an uncharacterized protein from Haemophilus influenzae (strain ATCC 51907 / DSM 11121 / KW20 / Rd).